Reading from the N-terminus, the 409-residue chain is Dihydrolipoyllysine-residue succinyltransferase component of 2-oxoglutarate dehydrogenase complex (409 aa).

The region spanning Ala2–Asn77 is the Lipoyl-binding domain. Residue Lys43 is modified to N6-lipoyllysine. Residues Ile112–Val149 form the Peripheral subunit-binding (PSBD) domain. Catalysis depends on residues His380 and Asp384.

This sequence belongs to the 2-oxoacid dehydrogenase family. Forms a 24-polypeptide structural core with octahedral symmetry. Part of the 2-oxoglutarate dehydrogenase (OGDH) complex composed of E1 (2-oxoglutarate dehydrogenase), E2 (dihydrolipoamide succinyltransferase) and E3 (dihydrolipoamide dehydrogenase); the complex contains multiple copies of the three enzymatic components (E1, E2 and E3). It depends on (R)-lipoate as a cofactor.

It catalyses the reaction N(6)-[(R)-dihydrolipoyl]-L-lysyl-[protein] + succinyl-CoA = N(6)-[(R)-S(8)-succinyldihydrolipoyl]-L-lysyl-[protein] + CoA. It functions in the pathway amino-acid degradation; L-lysine degradation via saccharopine pathway; glutaryl-CoA from L-lysine: step 6/6. Its function is as follows. E2 component of the 2-oxoglutarate dehydrogenase (OGDH) complex which catalyzes the second step in the conversion of 2-oxoglutarate to succinyl-CoA and CO(2). This Pseudomonas aeruginosa (strain ATCC 15692 / DSM 22644 / CIP 104116 / JCM 14847 / LMG 12228 / 1C / PRS 101 / PAO1) protein is Dihydrolipoyllysine-residue succinyltransferase component of 2-oxoglutarate dehydrogenase complex (sucB).